The chain runs to 184 residues: Large ribosomal subunit protein uL6 (184 aa).

Belongs to the universal ribosomal protein uL6 family. In terms of assembly, part of the 50S ribosomal subunit.

Its function is as follows. This protein binds to the 23S rRNA, and is important in its secondary structure. It is located near the subunit interface in the base of the L7/L12 stalk, and near the tRNA binding site of the peptidyltransferase center. In Pyrococcus furiosus (strain ATCC 43587 / DSM 3638 / JCM 8422 / Vc1), this protein is Large ribosomal subunit protein uL6.